The chain runs to 86 residues: Putative defensin-like protein 9 (86 aa).

An N-terminal signal peptide occupies residues 1-29 (MKSSMQLISTLFFLVILVVAPGMKMVVEG). Gln30 carries the pyrrolidone carboxylic acid modification. Cystine bridges form between Cys34–Cys79, Cys45–Cys65, Cys51–Cys73, and Cys55–Cys75.

It belongs to the DEFL family.

The protein resides in the secreted. The chain is Putative defensin-like protein 9 (LCR76) from Arabidopsis thaliana (Mouse-ear cress).